We begin with the raw amino-acid sequence, 427 residues long: Trigger factor (427 aa).

Residues 163–248 (GDTVVIDFVG…VNEVKAKEVP (86 aa)) form the PPIase FKBP-type domain.

The protein belongs to the FKBP-type PPIase family. Tig subfamily.

The protein resides in the cytoplasm. The enzyme catalyses [protein]-peptidylproline (omega=180) = [protein]-peptidylproline (omega=0). Involved in protein export. Acts as a chaperone by maintaining the newly synthesized protein in an open conformation. Functions as a peptidyl-prolyl cis-trans isomerase. The sequence is that of Trigger factor from Streptococcus thermophilus (strain CNRZ 1066).